We begin with the raw amino-acid sequence, 159 residues long: Neuroglobin (159 aa).

Residues 3–151 (KLSEKDKGLI…VVSAMTRGWA (149 aa)) form the Globin domain. Residues His66 and His98 each coordinate heme b.

The protein belongs to the globin family. As to quaternary structure, monomer. Homodimers and homotetramers. Mainly monomeric but also detected as part of homodimers and homotetramers. As to expression, detected in brain, eye and gill, but not in muscle and blood (at protein level). Particularly high expression in the periventral zone of tectum opticum, with significant expression detected in white matter, preglomerular nucleus, posterior tubular nucleus, torus longitudinalis, hypothalamus, pituitary gland, posterior tuberculum, hypothalamus, synencephalon and formatio reticularis. Detected also in brain regions of the visual system, predominantly in parts of tectum opticum and torus semicircularis, area dorsalis telencephali and medulla oblongata. Strong expression observed in sensory epithelium of peripheral olfactory organ, and outer and inner nuclear layers and ganglion cell layer of retina.

It is found in the cytoplasm. The protein resides in the cytosol. It localises to the mitochondrion matrix. It catalyses the reaction Fe(III)-heme b-[protein] + nitric oxide + H2O = Fe(II)-heme b-[protein] + nitrite + 2 H(+). Functionally, monomeric globin with a bis-histidyl six-coordinate heme-iron atom through which it can bind dioxygen, carbon monoxide and nitric oxide. Could help transport oxygen and increase its availability to the metabolically active neuronal tissues, though its low quantity in tissues as well as its high affinity for dioxygen, which may limit its oxygen-releasing ability, argue against it. The ferrous/deoxygenated form exhibits a nitrite reductase activity and it could produce nitric oxide which in turn inhibits cellular respiration in response to hypoxia. In its ferrous/deoxygenated state, it may also exhibit GDI (Guanine nucleotide Dissociation Inhibitor) activity toward heterotrimeric G-alpha proteins, thereby regulating signal transduction to facilitate neuroprotective responses in the wake of hypoxia and associated oxidative stress. The sequence is that of Neuroglobin (ngb) from Danio rerio (Zebrafish).